The primary structure comprises 100 residues: UPF0213 protein YhbQ (100 aa).

The region spanning 2-77 (TPWFLYLIRT…KQLTKRQKER (76 aa)) is the GIY-YIG domain.

It belongs to the UPF0213 family.

The protein is UPF0213 protein YhbQ of Escherichia coli O7:K1 (strain IAI39 / ExPEC).